Here is a 145-residue protein sequence, read N- to C-terminus: Transcriptional regulator MraZ (145 aa).

SpoVT-AbrB domains lie at 5–49 (TYNH…LESE) and 78–121 (TYKV…AKEV).

This sequence belongs to the MraZ family. As to quaternary structure, forms oligomers.

It localises to the cytoplasm. It is found in the nucleoid. In Ureaplasma urealyticum serovar 10 (strain ATCC 33699 / Western), this protein is Transcriptional regulator MraZ.